Consider the following 341-residue polypeptide: MPILCTTGCSRKAFLKRPKTGDTLCRECFFLAFETEIHNTIEQNKLFRRGDVVAIAASGGKDSTVLAHVLKVLNERYDYGLKLVLLSIDEGITGYRDDSLETVKRNRDDYGMELKILSYDELYGWTMDKIVSKIGRSNNCTFCGVFRRQALDRGARLMEVDCVATGHNADDIAETVLMNILRGDTARLRRCCDIKTGGKDADSIPRVKPLKYAYEKEIVMYAHFKKLVYFSTECVFAPNAYRGHARAFLKDLERIRPSVIMDIIHSGEQLSFKDTVKKPLRGKCNRCGFVSSQQPCKACVLLEGLNRGLPKLGVGKKSKANRMIAAQNSLRQSANLVKTDF.

Belongs to the TtcA family. CTU1/NCS6/ATPBD3 subfamily.

It is found in the cytoplasm. It functions in the pathway tRNA modification; 5-methoxycarbonylmethyl-2-thiouridine-tRNA biosynthesis. Functionally, plays a central role in 2-thiolation of mcm(5)S(2)U at tRNA wobble positions of tRNA(Lys), tRNA(Glu) and tRNA(Gln). Directly binds tRNAs and probably acts by catalyzing adenylation of tRNAs, an intermediate required for 2-thiolation. It is unclear whether it acts as a sulfurtransferase that transfers sulfur from thiocarboxylated URM1 onto the uridine of tRNAs at wobble position. This chain is Cytoplasmic tRNA 2-thiolation protein 1, found in Aedes aegypti (Yellowfever mosquito).